Consider the following 453-residue polypeptide: Bifunctional protein GlmU (453 aa).

The pyrophosphorylase stretch occupies residues M1–R225. Residues L7–G10, K21, Q72, and G77–T78 contribute to the UDP-N-acetyl-alpha-D-glucosamine site. D102 serves as a coordination point for Mg(2+). Residues G138, E152, N167, and N223 each contribute to the UDP-N-acetyl-alpha-D-glucosamine site. N223 is a binding site for Mg(2+). The tract at residues E226–K246 is linker. The N-acetyltransferase stretch occupies residues G247–G453. UDP-N-acetyl-alpha-D-glucosamine-binding residues include R329 and K347. H359 acts as the Proton acceptor in catalysis. UDP-N-acetyl-alpha-D-glucosamine contacts are provided by Y362 and N373. Acetyl-CoA contacts are provided by residues A376, N382–Y383, S401, A419, and R436.

It in the N-terminal section; belongs to the N-acetylglucosamine-1-phosphate uridyltransferase family. The protein in the C-terminal section; belongs to the transferase hexapeptide repeat family. Homotrimer. It depends on Mg(2+) as a cofactor.

Its subcellular location is the cytoplasm. The catalysed reaction is alpha-D-glucosamine 1-phosphate + acetyl-CoA = N-acetyl-alpha-D-glucosamine 1-phosphate + CoA + H(+). The enzyme catalyses N-acetyl-alpha-D-glucosamine 1-phosphate + UTP + H(+) = UDP-N-acetyl-alpha-D-glucosamine + diphosphate. It participates in nucleotide-sugar biosynthesis; UDP-N-acetyl-alpha-D-glucosamine biosynthesis; N-acetyl-alpha-D-glucosamine 1-phosphate from alpha-D-glucosamine 6-phosphate (route II): step 2/2. It functions in the pathway nucleotide-sugar biosynthesis; UDP-N-acetyl-alpha-D-glucosamine biosynthesis; UDP-N-acetyl-alpha-D-glucosamine from N-acetyl-alpha-D-glucosamine 1-phosphate: step 1/1. Its pathway is bacterial outer membrane biogenesis; LPS lipid A biosynthesis. Functionally, catalyzes the last two sequential reactions in the de novo biosynthetic pathway for UDP-N-acetylglucosamine (UDP-GlcNAc). The C-terminal domain catalyzes the transfer of acetyl group from acetyl coenzyme A to glucosamine-1-phosphate (GlcN-1-P) to produce N-acetylglucosamine-1-phosphate (GlcNAc-1-P), which is converted into UDP-GlcNAc by the transfer of uridine 5-monophosphate (from uridine 5-triphosphate), a reaction catalyzed by the N-terminal domain. The polypeptide is Bifunctional protein GlmU (Thermus thermophilus (strain ATCC 27634 / DSM 579 / HB8)).